A 494-amino-acid polypeptide reads, in one-letter code: Cobyric acid synthase (494 aa).

In terms of domain architecture, GATase cobBQ-type spans 252–444; it reads DLNIAVIRLP…LHGLFDNGPW (193 aa). Cys333 (nucleophile) is an active-site residue. Residue His436 is part of the active site.

This sequence belongs to the CobB/CobQ family. CobQ subfamily.

Its pathway is cofactor biosynthesis; adenosylcobalamin biosynthesis. Functionally, catalyzes amidations at positions B, D, E, and G on adenosylcobyrinic A,C-diamide. NH(2) groups are provided by glutamine, and one molecule of ATP is hydrogenolyzed for each amidation. The sequence is that of Cobyric acid synthase from Nostoc punctiforme (strain ATCC 29133 / PCC 73102).